Reading from the N-terminus, the 374-residue chain is MASGFCSLALTVTTSLFSSHAITRRVLPILRWRSSSMSLSPLRHSRALSAATTVPISSSFTWDDVIETGRAEYNSSDLTGFFEKINRCNRGSEKLGEFIPFVIEEQIVGYIHKRFTEYLREFHDIFTFSQNGSCPDRVDGYVTLNLMLQKPEDRTRAVADVIKILGDKGIIPGIRNELYPVKPSFNAPVFFSLERAAAPYFGIKGYGVHMNGYVERDGQKLLWIGKRSLSKSTYPGMLDHLVAGGLPHGISCGGNLVKECEEEAGISRAIADRAIAVGAVSYLDIDQYCFKRDVLFCYDLELPEDFVPKNQDGEVESFKLIPVAQVASVIKKTSFFKANCSLVIIDFLFRHGFIRPESSGYLDLYQRLRNRDCS.

A chloroplast-targeting transit peptide spans 1-49 (MASGFCSLALTVTTSLFSSHAITRRVLPILRWRSSSMSLSPLRHSRALS). In terms of domain architecture, Nudix hydrolase spans 205-346 (GYGVHMNGYV…KANCSLVIID (142 aa)). The Nudix box signature appears at 244 to 265 (GGLPHGISCGGNLVKECEEEAG). Mg(2+)-binding residues include Glu259 and Glu263.

This sequence belongs to the Nudix hydrolase family. Mg(2+) is required as a cofactor. Mn(2+) serves as cofactor. Expressed in leaves and inflorescences.

It is found in the plastid. It localises to the chloroplast. Probably mediates the hydrolysis of some nucleoside diphosphate derivatives. This chain is Nudix hydrolase 20, chloroplastic (NUDT20), found in Arabidopsis thaliana (Mouse-ear cress).